The sequence spans 1058 residues: Bromodomain-containing protein 1 (1058 aa).

Positions 1–12 are enriched in basic residues; the sequence is MRRKGRCHRGSA. A disordered region spans residues 1-26; the sequence is MRRKGRCHRGSAARHPSSPCSVKHSP. The interaction with KAT7/HBO1 and histones stretch occupies residues 31–80; the sequence is LTYAQAQRMVEIEIEGRLHRISIFDPLEIILEDDLTAQEMSECNSNKENS. Residues 92–116 form a disordered region; that stretch reads HKNNRVKKKNEALPSAHGTPASASA. Phosphoserine is present on Ser-128. The segment at 214–264 adopts a PHD-type 1 zinc-finger fold; it reads DAVCCICMDGECQNSNVILFCDMCNLAVHQECYGVPYIPEGQWLCRHCLQS. Residues 268–301 form a C2HC pre-PHD-type zinc finger; the sequence is PADCVLCPNKGGAFKKTDDDRWGHVVCALWIPEV. The segment at 325-389 adopts a PHD-type 2 zinc-finger fold; sequence LTCYLCKQKG…RKTAYCDVHT (65 aa). An N6-acetyllysine mark is found at Lys-368, Lys-516, and Lys-519. Glycyl lysine isopeptide (Lys-Gly) (interchain with G-Cter in SUMO2) cross-links involve residues Lys-554 and Lys-594. Residues 562 to 666 form the Bromo domain; that stretch reads LRLTPLTVLL…DQGGVVLRQA (105 aa). Disordered stretches follow at residues 755-776 and 791-868; these read LSQQ…EEDG and LETL…DSSF. Phosphoserine is present on Ser-803. The segment covering 852 to 867 has biased composition (low complexity); it reads SESSISSSNSPLCDSS. Lys-903 is subject to N6-acetyllysine. At Arg-906 the chain carries Phosphoserine. The 84-residue stretch at 929–1012 folds into the PWWP domain; it reads PLKVVWAKCS…KSKMVPLGID (84 aa). Phosphoserine occurs at positions 1052 and 1055.

As to quaternary structure, component of some HBO1 complex composed of KAT7/HBO1, MEAF6, ING4 and BRD1/BRPF2. Component of the MOZ/MORF complex composed at least of ING5, KAT6A, KAT6B, MEAF6 and one of BRPF1, BRD1/BRPF2 and BRPF3. Interacts (via PHD-type zinc finger domain) with unmodified histone H3. Interacts (via PWWP domain) with dimethylated and trimethylated 'Lys-79' on histone H3. Highly expressed in testis.

Its subcellular location is the nucleus. It localises to the chromosome. Functionally, scaffold subunit of various histone acetyltransferase (HAT) complexes, such as the MOZ/MORF and HBO1 complexes, that acts as a regulator of hematopoiesis. Plays a key role in HBO1 complex by directing KAT7/HBO1 specificity towards histone H3 'Lys-14' acetylation (H3K14ac), thereby promoting erythroid differentiation. This Homo sapiens (Human) protein is Bromodomain-containing protein 1.